The following is a 133-amino-acid chain: Phosphoribosyl-ATP pyrophosphatase (133 aa).

The disordered stretch occupies residues 1 to 22 (MGKPATKPAPKPSKQQDDKKSD).

It belongs to the PRA-PH family.

Its subcellular location is the cytoplasm. The enzyme catalyses 1-(5-phospho-beta-D-ribosyl)-ATP + H2O = 1-(5-phospho-beta-D-ribosyl)-5'-AMP + diphosphate + H(+). It functions in the pathway amino-acid biosynthesis; L-histidine biosynthesis; L-histidine from 5-phospho-alpha-D-ribose 1-diphosphate: step 2/9. The protein is Phosphoribosyl-ATP pyrophosphatase of Gluconobacter oxydans (strain 621H) (Gluconobacter suboxydans).